Consider the following 173-residue polypeptide: DNA N-6-adenine-methyltransferase (173 aa).

The protein belongs to the N(4)/N(6)-methyltransferase family.

It carries out the reaction a 2'-deoxyadenosine in DNA + S-adenosyl-L-methionine = an N(6)-methyl-2'-deoxyadenosine in DNA + S-adenosyl-L-homocysteine + H(+). Methyltransferase that methylates adenine residues in the ssDNA and dsDNA sequence 5'-GATC-3'. May prevent degradation of viral DNA by the host restriction-modification antiviral defense system. The sequence is that of DNA N-6-adenine-methyltransferase from Haemophilus influenzae (Bacteriophage HP1).